A 270-amino-acid chain; its full sequence is NAD(P)H-hydrate epimerase (270 aa).

Residues 25-234 (FQQLMDLMQN…DLLAPEAIYQ (210 aa)) enclose the YjeF N-terminal domain. (6S)-NADPHX is bound at residue 73–77 (DNGGQ). Residues asparagine 74 and aspartate 144 each contribute to the K(+) site. Residues 148–154 (GVGLYGH) and glutamate 177 each bind (6S)-NADPHX. Threonine 180 contributes to the K(+) binding site.

Belongs to the NnrE/AIBP family. K(+) is required as a cofactor.

The catalysed reaction is (6R)-NADHX = (6S)-NADHX. It carries out the reaction (6R)-NADPHX = (6S)-NADPHX. Catalyzes the epimerization of the S- and R-forms of NAD(P)HX, a damaged form of NAD(P)H that is a result of enzymatic or heat-dependent hydration. This is a prerequisite for the S-specific NAD(P)H-hydrate dehydratase to allow the repair of both epimers of NAD(P)HX. This is NAD(P)H-hydrate epimerase from Legionella pneumophila subsp. pneumophila (strain Philadelphia 1 / ATCC 33152 / DSM 7513).